The chain runs to 147 residues: Large ribosomal subunit protein uL15 (147 aa).

The segment covering 1-12 has biased composition (basic and acidic residues); that stretch reads MTLRLNDLKPAD. The segment at 1-61 is disordered; that stretch reads MTLRLNDLKP…GFEGGQTPMQ (61 aa). Residues 23 to 33 are compositionally biased toward gly residues; sequence RGIGSGLGKTA. A compositionally biased stretch (basic residues) spans 34–47; the sequence is GRGHKGSFARKGGG.

The protein belongs to the universal ribosomal protein uL15 family. As to quaternary structure, part of the 50S ribosomal subunit.

In terms of biological role, binds to the 23S rRNA. This Xanthomonas oryzae pv. oryzae (strain MAFF 311018) protein is Large ribosomal subunit protein uL15.